Here is a 386-residue protein sequence, read N- to C-terminus: 4-hydroxy-3-methylbut-2-en-1-yl diphosphate synthase (flavodoxin) (386 aa).

Residues C281, C284, C316, and E323 each coordinate [4Fe-4S] cluster.

Belongs to the IspG family. [4Fe-4S] cluster is required as a cofactor.

It carries out the reaction (2E)-4-hydroxy-3-methylbut-2-enyl diphosphate + oxidized [flavodoxin] + H2O + 2 H(+) = 2-C-methyl-D-erythritol 2,4-cyclic diphosphate + reduced [flavodoxin]. It participates in isoprenoid biosynthesis; isopentenyl diphosphate biosynthesis via DXP pathway; isopentenyl diphosphate from 1-deoxy-D-xylulose 5-phosphate: step 5/6. Converts 2C-methyl-D-erythritol 2,4-cyclodiphosphate (ME-2,4cPP) into 1-hydroxy-2-methyl-2-(E)-butenyl 4-diphosphate. The polypeptide is 4-hydroxy-3-methylbut-2-en-1-yl diphosphate synthase (flavodoxin) (Corynebacterium jeikeium (strain K411)).